The following is a 221-amino-acid chain: Aspartic protease inhibitor 1 (221 aa).

A signal peptide spans 1–23 (MMKCLFFLCLCLFPILVFSSTFT). The propeptide occupies 24-32 (SQNPINLPS). The short motif at 26–31 (NPINLP) is the Vacuolar targeting signal element. A glycan (N-linked (GlcNAc...) asparagine) is linked at asparagine 51. Cystine bridges form between cysteine 80-cysteine 125 and cysteine 174-cysteine 186.

This sequence belongs to the protease inhibitor I3 (leguminous Kunitz-type inhibitor) family. In terms of tissue distribution, tubers, young leaves and flower bud. Not detected in root, stem or mature leaves.

It is found in the vacuole. Inhibitor of cathepsin D (aspartic protease). May also inhibit trypsin and chymotrypsin (serine proteases). Protects the plant by inhibiting proteases of invading organisms. The polypeptide is Aspartic protease inhibitor 1 (Solanum tuberosum (Potato)).